The sequence spans 253 residues: Protein C1orf43 homolog (253 aa).

A helical transmembrane segment spans residues 11 to 31 (VNVVLVMAYGSLVFVLLFIFV).

It is found in the membrane. Its subcellular location is the golgi apparatus. It localises to the mitochondrion. In terms of biological role, general regulator of phagocytosis. Required to uptake Gram negative bacterium by macrophages. The sequence is that of Protein C1orf43 homolog from Mus musculus (Mouse).